The primary structure comprises 327 residues: N-acetyl-gamma-glutamyl-phosphate reductase (327 aa).

The active site involves Cys136.

The protein belongs to the NAGSA dehydrogenase family. Type 1 subfamily.

The protein resides in the cytoplasm. It carries out the reaction N-acetyl-L-glutamate 5-semialdehyde + phosphate + NADP(+) = N-acetyl-L-glutamyl 5-phosphate + NADPH + H(+). The protein operates within amino-acid biosynthesis; L-arginine biosynthesis; N(2)-acetyl-L-ornithine from L-glutamate: step 3/4. In terms of biological role, catalyzes the NADPH-dependent reduction of N-acetyl-5-glutamyl phosphate to yield N-acetyl-L-glutamate 5-semialdehyde. This is N-acetyl-gamma-glutamyl-phosphate reductase from Xylella fastidiosa (strain M23).